We begin with the raw amino-acid sequence, 457 residues long: MLPSQSPAIFTVSRLNQTVRLLLEHEIGQVWISGEISNFTQPASGHWYFTLKDDNAQVRCAMFRNSNRRVTFRPQHGQQVLVRANITLYEPRGDYQIIVESMQPAGEGLLQQKYEQLKAKLQAEGLFDQQLKKPLPSPAHCVGVITSKTGAALHDILHVLKRRDPSLPVIIYPTAVQGDDAPGQIVRAIELANKRNECDVLIVGRGGGSLEDLWSFNDERVARAIFASRIPVVSAVGHETDVTIADFIADLRAPTPSAAAEMVSRNQQELLRQIQSVQQRLGMAMDYFLANRTRRLTLLHHRLQQQHPQLRLARQQTALERLQQRMNLAIDSQIKRTNKRQVRLLQRLNQQNPQPRIHRVQSRIQHLEHRLAEHVHSRLSAMRERFGNAVTHLEAVSPLSTLARGYSVTTVTDGKVLKKVKQVKTGDVMTTRLEDGWVKSEVKGITSAKRAQKKKPD.

The protein belongs to the XseA family. Heterooligomer composed of large and small subunits.

The protein localises to the cytoplasm. The enzyme catalyses Exonucleolytic cleavage in either 5'- to 3'- or 3'- to 5'-direction to yield nucleoside 5'-phosphates.. In terms of biological role, bidirectionally degrades single-stranded DNA into large acid-insoluble oligonucleotides, which are then degraded further into small acid-soluble oligonucleotides. This chain is Exodeoxyribonuclease 7 large subunit, found in Escherichia coli O127:H6 (strain E2348/69 / EPEC).